The primary structure comprises 327 residues: Clavesin-2 (327 aa).

The CRAL-TRIO domain occupies 96–257 (IKQALKDGFP…EFGGMLPPYD (162 aa)). The tract at residues 289–327 (DKELSPKSMKRSQSVVDPTALKRMDKSEEENMQPLLALD) is disordered.

In terms of assembly, forms a complex with clathrin heavy chain and gamma-adaptin.

It localises to the golgi apparatus. Its subcellular location is the trans-Golgi network membrane. The protein resides in the early endosome membrane. It is found in the cytoplasmic vesicle. The protein localises to the clathrin-coated vesicle. Functionally, required for normal morphology of late endosomes and/or lysosomes in neurons. Binds phosphatidylinositol 3,5-bisphosphate (PtdIns(3,5)P2). The chain is Clavesin-2 (Clvs2) from Mus musculus (Mouse).